The primary structure comprises 1063 residues: Exportin-1 (1063 aa).

In terms of domain architecture, Importin N-terminal spans 43 to 109 (AQSILTTLKE…KKYVVSLIIK (67 aa)). The segment at 1034–1063 (AEEQSNKHQMQRNIPGMLNPHELPEDMQDE) is disordered.

It belongs to the exportin family. Interacts with Clbn (via its N-terminus). Associates with the nuclear pore complex via interaction with mbo and Nup214. Interacts with target proteins containing NES sequences such as actin and dl. As to expression, high expression observed in the developing embryonic brain, hind gut and posterior spiracles shortly before dorsal closure; and in the ventral nerve cord, midgut and somatic musculature shortly after dorsal closure. Expression increases when the tissue is well developed.

The protein localises to the nucleus. The protein resides in the nucleus membrane. In terms of biological role, receptor for the leucine-rich nuclear export signal (NES). Binds cooperatively to the NES on its target protein and to the small GTPase Ran in its active GTP-bound form. Involved in the export of dl, RpS2 and the pre-40S ribosome from the nucleus to the cytoplasm. Plays an important role in nuclear pore assembly by mediating nucleoporin condensation and biogenesis of annulate lamellae. Required for the function or maintenance of certain tissues such as brain and gut. This chain is Exportin-1, found in Drosophila melanogaster (Fruit fly).